Reading from the N-terminus, the 122-residue chain is Large ribosomal subunit protein uL14c (122 aa).

It belongs to the universal ribosomal protein uL14 family. Part of the 50S ribosomal subunit.

The protein localises to the plastid. Its subcellular location is the chloroplast. Binds to 23S rRNA. The polypeptide is Large ribosomal subunit protein uL14c (Chloranthus spicatus (Chulantree)).